Reading from the N-terminus, the 503-residue chain is Long-chain-fatty-acid--CoA ligase FadD13 (503 aa).

The protein belongs to the ATP-dependent AMP-binding enzyme family. Homodimer.

The protein localises to the cell membrane. It carries out the reaction a long-chain fatty acid + ATP + CoA = a long-chain fatty acyl-CoA + AMP + diphosphate. It participates in lipid metabolism; fatty acid biosynthesis. Its function is as follows. Required for maintaining the appropriate mycolic acid composition and permeability of the envelope on its exposure to acidic pH. Catalyzes the activation of long-chain fatty acids as acyl-coenzyme A (acyl-CoA), which are then transferred to the multifunctional polyketide synthase (PKS) type III for further chain extension. This is Long-chain-fatty-acid--CoA ligase FadD13 (fadD13) from Mycobacterium tuberculosis (strain CDC 1551 / Oshkosh).